The following is a 110-amino-acid chain: Competence pilus inhibition repressor (110 aa).

The 55-residue stretch at 7–61 (VRFLRKRQGWTQQQLADFSHTSKSNISNLENGNQGYSPAILEYLAKAFNCSVSQI) folds into the HTH cro/C1-type domain. Positions 18 to 37 (QQQLADFSHTSKSNISNLEN) form a DNA-binding region, H-T-H motif.

In terms of biological role, represses transcription of the PilB-specific inhibitory protein CpiA. This chain is Competence pilus inhibition repressor, found in Acinetobacter baylyi (strain ATCC 33305 / BD413 / ADP1).